Reading from the N-terminus, the 140-residue chain is Ubiquitin-like protein ATG12 (140 aa).

Residues 1 to 50 (MAEEPQSVLQLPTSIAAGGEGLTDVSPETTTPEPPSSAAVSPGTEEPAGD) are disordered. The segment covering 25 to 42 (VSPETTTPEPPSSAAVSP) has biased composition (low complexity). Glycine 140 is covalently cross-linked (Glycyl lysine isopeptide (Gly-Lys) (interchain with K-130 in ATG5)).

The protein belongs to the ATG12 family. As to quaternary structure, forms a conjugate with ATG5. Part of the minor complex composed of 4 sets of ATG12-ATG5 and ATG16L1 (400 kDa); this complex interacts with ATG3 leading to disruption of ATG7 interaction and promotion of ATG8-like proteins lipidation. Forms an 800-kDa complex composed of ATG12-ATG5 and ATG16L2. Interacts with DHX58/RIG-1, IFIH1/MDA5 and MAVS/IPS-1 in monomeric form as well as in ATG12-ATG5 conjugate. The interaction with MAVS is further enhanced upon vesicular stomatitis virus (VSV) infection. Interacts with ATG3; this interaction is essential for phosphatidylethanolamine (PE)-conjugated ATG8-like proteins formation. Interacts with ATG7. Interacts with ATG10. The ATG12-ATG5 conjugate interacts with RAB33A; this interaction is bridged by ATG16L1 and promotes ATG12-ATG5-ATG16L1 complex recruitment to phagophores. Interacts with TECPR1. Interacts with SH3BGRL. The ATG12-ATG5 conjugate interacts with PDCD6IP (via the BRO1 domain); this interaction is bridged by ATG12 and promotes multiple PDCD6IP-mediated functions such as endolysosomal trafficking, macroautophagy and exosome biogenesis. Post-translationally, acetylated by EP300. In terms of tissue distribution, ubiquitous.

The protein localises to the cytoplasm. Its subcellular location is the preautophagosomal structure membrane. Its function is as follows. Ubiquitin-like protein involved in autophagy vesicles formation. Conjugation with ATG5 through a ubiquitin-like conjugating system involving also ATG7 as an E1-like activating enzyme and ATG10 as an E2-like conjugating enzyme, is essential for its function. The ATG12-ATG5 conjugate acts as an E3-like enzyme which is required for lipidation of ATG8 family proteins and their association to the vesicle membranes. As part of the ATG8 conjugation system with ATG5 and ATG16L1, required for recruitment of LRRK2 to stressed lysosomes and induction of LRRK2 kinase activity in response to lysosomal stress. In terms of biological role, (Microbial infection) May act as a proviral factor. In association with ATG5, negatively regulates the innate antiviral immune response by impairing the type I IFN production pathway upon vesicular stomatitis virus (VSV) infection. Required for the translation of incoming hepatitis C virus (HCV) RNA and, thereby, for the initiation of HCV replication, but not required once infection is established. This Homo sapiens (Human) protein is Ubiquitin-like protein ATG12.